The following is a 664-amino-acid chain: Lysophospholipase 1 (664 aa).

Positions 1 to 22 are cleaved as a signal peptide; sequence MKLQSLLVSAAVLTSLTENVNA. N-linked (GlcNAc...) asparagine glycosylation is found at N26, N33, N52, N78, N92, N123, N160, N170, N215, N277, N307, N345, N388, N459, N489, N513, N541, N565, and N582. The 552-residue stretch at 35–586 folds into the PLA2c domain; sequence TCDDDINLVR…TNYCWNGTID (552 aa). N634 is lipidated: GPI-anchor amidated asparagine. A propeptide spans 635–664 (removed in mature form); sequence AGNALVNYSNLNTNTFIGVLSVISAVFGLI.

The protein belongs to the lysophospholipase family.

It localises to the cell membrane. It carries out the reaction a 1-acyl-sn-glycero-3-phosphocholine + H2O = sn-glycerol 3-phosphocholine + a fatty acid + H(+). The catalysed reaction is a 1-acyl-sn-glycero-3-phospho-(1D-myo-inositol) + H2O = sn-glycero-3-phospho-1D-myo-inositol + a fatty acid + H(+). The enzyme catalyses a 1-acyl-sn-glycero-3-phospho-L-serine + H2O = sn-glycero-3-phospho-L-serine + a fatty acid + H(+). It catalyses the reaction a 1,2-diacyl-sn-glycero-3-phospho-(1D-myo-inositol) + 2 H2O = sn-glycero-3-phospho-1D-myo-inositol + 2 a carboxylate + 2 H(+). It carries out the reaction a 1,2-diacyl-sn-glycero-3-phospho-L-serine + 2 H2O = sn-glycero-3-phospho-L-serine + 2 a carboxylate + 2 H(+). The catalysed reaction is 2 1-hexadecanoyl-sn-glycero-3-phosphocholine = 1,2-dihexadecanoyl-sn-glycero-3-phosphocholine + sn-glycerol 3-phosphocholine. The enzyme catalyses 1-hexadecanoyl-sn-glycero-3-phosphocholine + H2O = sn-glycerol 3-phosphocholine + hexadecanoate + H(+). It catalyses the reaction 1,2-dihexadecanoyl-sn-glycero-3-phosphocholine + H2O = 1-hexadecanoyl-sn-glycero-3-phosphocholine + hexadecanoate + H(+). Functionally, sequentially removes both fatty acyl groups from diacylglycerophospholipids and therefore has both phospholipase B and lysophospholipase activities. It also displays transacylase activity. Substrate preference is phosphatidylserine &gt; phosphatidylinositol &gt;&gt; phosphatidylcholine &gt; phosphatidylethanolamine. The substrate specificity is pH- and ion-dependent. In contrast with activities observed at optimum pH 3.5, the order of substrate preference at pH 5.5 is phosphatidylcholine = phosphatidylethanolamine &gt;&gt; phosphatidylinositol. Degrades predominantly phosphatidylcholine and to some extent phosphatidylinositol in vivo. This is Lysophospholipase 1 from Saccharomyces cerevisiae (strain ATCC 204508 / S288c) (Baker's yeast).